We begin with the raw amino-acid sequence, 632 residues long: Deoxynucleoside triphosphate triphosphohydrolase SAMHD1 (632 aa).

The interval 1–22 (MKGINGAKRVRHDASPSAQDGY) is disordered. An SAM domain is found at 44 to 107 (WDVEEVCLFL…LSCLRMLCQN (64 aa)). GTP is bound by residues Lys113 and Val114. A dGTP-binding site is contributed by Asn116. GTP is bound by residues Asp134, Gln139, and Arg142. The dGTP site is built by Gln146, Leu147, Val153, and Arg161. DATP is bound at residue Gln146. Gln146 contacts dCTP. Gln146 contributes to the dTTP binding site. Residue Arg161 participates in dATP binding. Residue Arg161 participates in dCTP binding. Arg161 is a binding site for dTTP. Positions 161 to 321 (RFEHSIGVGY…GIDVDKWDYF (161 aa)) constitute an HD domain. The Mn(2+) site is built by His164, His203, and Asp204. His207 and His212 together coordinate dATP. Residues His207 and His212 each contribute to the dCTP site. Residues His207 and His212 each contribute to the dTTP site. The active site involves His230. Residue Asp316 participates in Mn(2+) binding. DGTP-binding residues include Lys317, Tyr320, Asp324, Arg338, Arg357, Lys359, Asn363, Arg371, Tyr379, Gln380, His381, and Lys382. DATP is bound by residues Lys317, Tyr320, and Asp324. DCTP is bound by residues Lys317, Tyr320, and Asp324. Residues Lys317, Tyr320, and Asp324 each contribute to the dTTP site. Position 371 (Arg371) interacts with dATP. Residue Arg371 participates in dCTP binding. Gln380 serves as a coordination point for dATP. Gln380 provides a ligand contact to dCTP. Gln380 contributes to the dTTP binding site. Positions 456, 460, and 529 each coordinate GTP. Lys529 contacts dGTP.

This sequence belongs to the SAMHD1 family. As to quaternary structure, homodimer; in absence of GTP and dNTP. Homotetramer; in GTP- and dNTP-bound form. Interacts with rbbp8/CtIP. Requires Zn(2+) as cofactor.

It localises to the nucleus. Its subcellular location is the chromosome. The catalysed reaction is a 2'-deoxyribonucleoside 5'-triphosphate + H2O = a 2'-deoxyribonucleoside + triphosphate + H(+). It catalyses the reaction dATP + H2O = 2'-deoxyadenosine + triphosphate + H(+). The enzyme catalyses dCTP + H2O = 2'-deoxycytidine + triphosphate + H(+). It carries out the reaction dGTP + H2O = 2'-deoxyguanosine + triphosphate + H(+). The catalysed reaction is dTTP + H2O = thymidine + triphosphate + H(+). Allosterically activated and regulated via the combined actions of GTP and dNTPs (dATP, dGTP, dTTP and dCTP): Allosteric site 1 binds GTP, while allosteric site 2 binds dNTP. Allosteric activation promotes the formation of highly active homotetramers. Protein that acts both as a host restriction factor involved in defense response to virus and as a regulator of DNA end resection at stalled replication forks. Has deoxynucleoside triphosphate (dNTPase) activity, which is required to restrict infection by viruses: dNTPase activity reduces cellular dNTP levels to levels too low for retroviral reverse transcription to occur, blocking early-stage virus replication in dendritic and other myeloid cells. Functions during S phase at stalled DNA replication forks to promote the resection of gapped or reversed forks: acts by stimulating the exonuclease activity of mre11, activating the ATR-CHK1 pathway and allowing the forks to restart replication. Ability to promote DNA end resection at stalled replication forks is independent of dNTPase activity. This chain is Deoxynucleoside triphosphate triphosphohydrolase SAMHD1, found in Xenopus laevis (African clawed frog).